The primary structure comprises 861 residues: Glucans biosynthesis glucosyltransferase H (861 aa).

2 disordered regions span residues 65 to 89 (RLSA…SVGR) and 101 to 129 (AGEP…SMVP). 2 stretches are compositionally biased toward basic and acidic residues: residues 67-76 (SAREPAKGET) and 105-114 (LLKRRPDGTV). 6 consecutive transmembrane segments (helical) span residues 181 to 201 (FLLG…TKVL), 208 to 228 (LLEI…SAGF), 532 to 552 (VFLT…FLLL), 589 to 609 (LFSA…LLLV), 616 to 636 (GGLP…ALLA), and 698 to 718 (FVLW…LSVM).

This sequence belongs to the glycosyltransferase 2 family. OpgH subfamily.

The protein localises to the cell inner membrane. Its pathway is glycan metabolism; osmoregulated periplasmic glucan (OPG) biosynthesis. Functionally, involved in the biosynthesis of osmoregulated periplasmic glucans (OPGs). This is Glucans biosynthesis glucosyltransferase H from Cupriavidus pinatubonensis (strain JMP 134 / LMG 1197) (Cupriavidus necator (strain JMP 134)).